The following is a 1379-amino-acid chain: DNA-directed RNA polymerase subunit beta'' (1379 aa).

Positions 220, 293, 300, and 303 each coordinate Zn(2+).

This sequence belongs to the RNA polymerase beta' chain family. RpoC2 subfamily. In terms of assembly, in plastids the minimal PEP RNA polymerase catalytic core is composed of four subunits: alpha, beta, beta', and beta''. When a (nuclear-encoded) sigma factor is associated with the core the holoenzyme is formed, which can initiate transcription. The cofactor is Zn(2+).

It is found in the plastid. The protein resides in the chloroplast. The catalysed reaction is RNA(n) + a ribonucleoside 5'-triphosphate = RNA(n+1) + diphosphate. Functionally, DNA-dependent RNA polymerase catalyzes the transcription of DNA into RNA using the four ribonucleoside triphosphates as substrates. This Crucihimalaya wallichii (Rock-cress) protein is DNA-directed RNA polymerase subunit beta''.